A 162-amino-acid polypeptide reads, in one-letter code: NADH-quinone oxidoreductase subunit I (162 aa).

4Fe-4S ferredoxin-type domains are found at residues 53–83 and 93–122; these read LRRY…IEAE and TRYD…ETRI. The [4Fe-4S] cluster site is built by Cys63, Cys66, Cys69, Cys73, Cys102, Cys105, Cys108, and Cys112.

Belongs to the complex I 23 kDa subunit family. NDH-1 is composed of 14 different subunits. Subunits NuoA, H, J, K, L, M, N constitute the membrane sector of the complex. [4Fe-4S] cluster serves as cofactor.

Its subcellular location is the cell inner membrane. It catalyses the reaction a quinone + NADH + 5 H(+)(in) = a quinol + NAD(+) + 4 H(+)(out). Functionally, NDH-1 shuttles electrons from NADH, via FMN and iron-sulfur (Fe-S) centers, to quinones in the respiratory chain. The immediate electron acceptor for the enzyme in this species is believed to be ubiquinone. Couples the redox reaction to proton translocation (for every two electrons transferred, four hydrogen ions are translocated across the cytoplasmic membrane), and thus conserves the redox energy in a proton gradient. In Dechloromonas aromatica (strain RCB), this protein is NADH-quinone oxidoreductase subunit I.